Reading from the N-terminus, the 201-residue chain is Small ribosomal subunit protein uS2 (201 aa).

This sequence belongs to the universal ribosomal protein uS2 family. Part of the 50S ribosomal subunit.

The sequence is that of Small ribosomal subunit protein uS2 from Thermococcus kodakarensis (strain ATCC BAA-918 / JCM 12380 / KOD1) (Pyrococcus kodakaraensis (strain KOD1)).